A 120-amino-acid chain; its full sequence is NAD(P)H-quinone oxidoreductase subunit 3, chloroplastic (120 aa).

Helical transmembrane passes span 9–29, 64–84, and 88–108; these read IFWA…TISG, MFAL…PWAM, and VLGI…IVGS.

It belongs to the complex I subunit 3 family. In terms of assembly, NDH is composed of at least 16 different subunits, 5 of which are encoded in the nucleus.

The protein localises to the plastid. It is found in the chloroplast thylakoid membrane. It carries out the reaction a plastoquinone + NADH + (n+1) H(+)(in) = a plastoquinol + NAD(+) + n H(+)(out). The catalysed reaction is a plastoquinone + NADPH + (n+1) H(+)(in) = a plastoquinol + NADP(+) + n H(+)(out). Its function is as follows. NDH shuttles electrons from NAD(P)H:plastoquinone, via FMN and iron-sulfur (Fe-S) centers, to quinones in the photosynthetic chain and possibly in a chloroplast respiratory chain. The immediate electron acceptor for the enzyme in this species is believed to be plastoquinone. Couples the redox reaction to proton translocation, and thus conserves the redox energy in a proton gradient. The polypeptide is NAD(P)H-quinone oxidoreductase subunit 3, chloroplastic (Lotus japonicus (Lotus corniculatus var. japonicus)).